The following is a 4450-amino-acid chain: Gramicidin S synthase 2 (4450 aa).

A domain 1 (proline-activating) region spans residues 467-1044; sequence DKTIHQLFTE…IQEISNYING (578 aa). Carrier domains follow at residues 971–1046, 2006–2081, 3051–3126, and 4089–4164; these read VPTN…NGAK, APSS…ADGE, APRT…EETD, and APRN…THQE. Residues Ser-1006, Ser-2041, Ser-3086, and Ser-4124 each carry the O-(pantetheine 4'-phosphoryl)serine modification. The interval 1521-2080 is domain 2 (valine-activating); it reads DHVAVGWKDQ…SALAQYIADG (560 aa). Residues 2538-3134 are domain 3 (ornithine-activating); sequence YATNKIFHEL…TDTEQYMAIQ (597 aa). Residues 3590 to 4172 are domain 4 (leucine-activating); it reads IQELFEEQVK…QESENNVHQP (583 aa).

It belongs to the ATP-dependent AMP-binding enzyme family. In terms of assembly, large multienzyme complex of GrsA and GrsB. Pantetheine 4'-phosphate is required as a cofactor.

It functions in the pathway antibiotic biosynthesis; gramicidin S biosynthesis. In terms of biological role, this protein is a multifunctional enzyme, able to activate and polymerize the amino acids Pro, Val, Orn and Leu. Activation sites for these AA consist of individual domains. This Brevibacillus brevis (Bacillus brevis) protein is Gramicidin S synthase 2 (grsB).